Reading from the N-terminus, the 248-residue chain is E3 SUMO-protein ligase NSE2 (248 aa).

Met-1 carries the N-acetylmethionine modification. Glycyl lysine isopeptide (Lys-Gly) (interchain with G-Cter in SUMO2) cross-links involve residues Lys-92 and Lys-109. Ser-118 carries the post-translational modification Phosphoserine. Glycyl lysine isopeptide (Lys-Gly) (interchain with G-Cter in SUMO2) cross-links involve residues Lys-127 and Lys-132. The SP-RING-type zinc-finger motif lies at 156-242 (VDEDMIVTQS…LRRAIESHKK (87 aa)). Residues Cys-187, His-189, Cys-212, and Cys-217 each coordinate Zn(2+).

Belongs to the NSE2 family. In terms of assembly, component of the SMC5-SMC6 complex which consists at least of SMC5, SMC6, NSMCE2, NSMCE1, NSMCE4A or EID3 and NSMCE3. Post-translationally, sumoylated, possibly via autosumoylation.

It is found in the nucleus. It localises to the chromosome. The protein localises to the telomere. Its subcellular location is the PML body. It functions in the pathway protein modification; protein sumoylation. E3 SUMO-protein ligase component of the SMC5-SMC6 complex, a complex involved in DNA double-strand break repair by homologous recombination. Is not be required for the stability of the complex. The complex may promote sister chromatid homologous recombination by recruiting the SMC1-SMC3 cohesin complex to double-strand breaks. Acts as an E3 ligase mediating SUMO attachment to various proteins such as SMC6L1 and TSNAX, the shelterin complex subunits TERF1, TERF2, TINF2 and TERF2IP, RAD51AP1, and maybe the cohesin components RAD21 and STAG2. Required for recruitment of telomeres to PML nuclear bodies. Required for sister chromatid cohesion during prometaphase and mitotic progression. The sequence is that of E3 SUMO-protein ligase NSE2 (NSMCE2) from Bos taurus (Bovine).